Consider the following 80-residue polypeptide: RNA-binding protein Hfq (80 aa).

Residues 10 to 70 (DLFLNTVRKQ…ISTIMPGQPL (61 aa)) form the Sm domain.

This sequence belongs to the Hfq family. As to quaternary structure, homohexamer.

RNA chaperone that binds small regulatory RNA (sRNAs) and mRNAs to facilitate mRNA translational regulation in response to envelope stress, environmental stress and changes in metabolite concentrations. Also binds with high specificity to tRNAs. This Rhizobium meliloti (strain 1021) (Ensifer meliloti) protein is RNA-binding protein Hfq.